Consider the following 250-residue polypeptide: Ribose-5-phosphate isomerase A (250 aa).

Residues 33–36, 89–92, and 102–105 contribute to the substrate site; these read TGST, DGAD, and KGGG. Glu-111 (proton acceptor) is an active-site residue. Lys-129 contacts substrate.

Belongs to the ribose 5-phosphate isomerase family. Homodimer.

It catalyses the reaction aldehydo-D-ribose 5-phosphate = D-ribulose 5-phosphate. It participates in carbohydrate degradation; pentose phosphate pathway; D-ribose 5-phosphate from D-ribulose 5-phosphate (non-oxidative stage): step 1/1. Functionally, catalyzes the reversible conversion of ribose-5-phosphate to ribulose 5-phosphate. This chain is Ribose-5-phosphate isomerase A, found in Cereibacter sphaeroides (strain ATCC 17025 / ATH 2.4.3) (Rhodobacter sphaeroides).